A 35-amino-acid polypeptide reads, in one-letter code: Photosystem II reaction center protein T (35 aa).

Residues alanine 3 to phenylalanine 23 form a helical membrane-spanning segment.

It belongs to the PsbT family. In terms of assembly, PSII is composed of 1 copy each of membrane proteins PsbA, PsbB, PsbC, PsbD, PsbE, PsbF, PsbH, PsbI, PsbJ, PsbK, PsbL, PsbM, PsbT, PsbY, PsbZ, Psb30/Ycf12, at least 3 peripheral proteins of the oxygen-evolving complex and a large number of cofactors. It forms dimeric complexes.

Its subcellular location is the plastid. It localises to the chloroplast thylakoid membrane. Found at the monomer-monomer interface of the photosystem II (PS II) dimer, plays a role in assembly and dimerization of PSII. PSII is a light-driven water plastoquinone oxidoreductase, using light energy to abstract electrons from H(2)O, generating a proton gradient subsequently used for ATP formation. This Ginkgo biloba (Ginkgo) protein is Photosystem II reaction center protein T.